Here is a 500-residue protein sequence, read N- to C-terminus: Probable glycine dehydrogenase (decarboxylating) subunit 2 (500 aa).

The tract at residues 1–25 (MLIFEHSRPGRRNYSQSPKAAEATD) is disordered. K263 bears the N6-(pyridoxal phosphate)lysine mark.

Belongs to the GcvP family. C-terminal subunit subfamily. In terms of assembly, the glycine cleavage system is composed of four proteins: P, T, L and H. In this organism, the P 'protein' is a heterodimer of two subunits. Requires pyridoxal 5'-phosphate as cofactor.

The enzyme catalyses N(6)-[(R)-lipoyl]-L-lysyl-[glycine-cleavage complex H protein] + glycine + H(+) = N(6)-[(R)-S(8)-aminomethyldihydrolipoyl]-L-lysyl-[glycine-cleavage complex H protein] + CO2. The glycine cleavage system catalyzes the degradation of glycine. The P protein binds the alpha-amino group of glycine through its pyridoxal phosphate cofactor; CO(2) is released and the remaining methylamine moiety is then transferred to the lipoamide cofactor of the H protein. The sequence is that of Probable glycine dehydrogenase (decarboxylating) subunit 2 from Nitrosospira multiformis (strain ATCC 25196 / NCIMB 11849 / C 71).